The primary structure comprises 214 residues: ATP-dependent Clp protease proteolytic subunit (214 aa).

Ser114 serves as the catalytic Nucleophile. His139 is an active-site residue.

It belongs to the peptidase S14 family. In terms of assembly, fourteen ClpP subunits assemble into 2 heptameric rings which stack back to back to give a disk-like structure with a central cavity, resembling the structure of eukaryotic proteasomes.

Its subcellular location is the cytoplasm. It carries out the reaction Hydrolysis of proteins to small peptides in the presence of ATP and magnesium. alpha-casein is the usual test substrate. In the absence of ATP, only oligopeptides shorter than five residues are hydrolyzed (such as succinyl-Leu-Tyr-|-NHMec, and Leu-Tyr-Leu-|-Tyr-Trp, in which cleavage of the -Tyr-|-Leu- and -Tyr-|-Trp bonds also occurs).. In terms of biological role, cleaves peptides in various proteins in a process that requires ATP hydrolysis. Has a chymotrypsin-like activity. Plays a major role in the degradation of misfolded proteins. This chain is ATP-dependent Clp protease proteolytic subunit, found in Nitrosomonas europaea (strain ATCC 19718 / CIP 103999 / KCTC 2705 / NBRC 14298).